Consider the following 472-residue polypeptide: Tryptophanase (472 aa).

Residue Lys-270 is modified to N6-(pyridoxal phosphate)lysine.

It belongs to the beta-eliminating lyase family. As to quaternary structure, homotetramer. Pyridoxal 5'-phosphate serves as cofactor.

The enzyme catalyses L-tryptophan + H2O = indole + pyruvate + NH4(+). It functions in the pathway amino-acid degradation; L-tryptophan degradation via pyruvate pathway; indole and pyruvate from L-tryptophan: step 1/1. The chain is Tryptophanase (tnaA) from Vibrio cholerae serotype O1 (strain ATCC 39315 / El Tor Inaba N16961).